A 167-amino-acid chain; its full sequence is MRCGSLCRFLWLWSCLPYIEAMPIQRVQDDTKTLIKTIITRINDISPPQGVCSRPRVAGLDFIPRVQSVRTLSGMDQILATYQQILTSLQSRSVVQIANDLANLRALLRLLASAKSCPVPRARGSDTIKGLGNVLRASVHSTEVVALSRLKAALQDMLRQLDRNPGC.

The N-terminal stretch at 1–21 (MRCGSLCRFLWLWSCLPYIEA) is a signal peptide. Cys-117 and Cys-167 form a disulfide bridge.

This sequence belongs to the leptin family.

The protein resides in the secreted. Key player in the regulation of energy balance and body weight control. Once released into the circulation, has central and peripheral effects by binding LEPR, found in many tissues, which results in the activation of several major signaling pathways. In the hypothalamus, acts as an appetite-regulating factor that induces a decrease in food intake and an increase in energy consumption by inducing anorexinogenic factors and suppressing orexigenic neuropeptides, also regulates bone mass and secretion of hypothalamo-pituitary-adrenal hormones. In the periphery, increases basal metabolism, influences reproductive function, regulates pancreatic beta-cell function and insulin secretion, is pro-angiogenic for endothelial cell and affects innate and adaptive immunity. In the arcuate nucleus of the hypothalamus, activates by depolarization POMC neurons inducing FOS and SOCS3 expression to release anorexigenic peptides and inhibits by hyperpolarization NPY neurons inducing SOCS3 with a consequent reduction on release of orexigenic peptides. In addition to its known satiety inducing effect, has a modulatory role in nutrient absorption. In the intestine, reduces glucose absorption by enterocytes by activating PKC and leading to a sequential activation of p38, PI3K and ERK signaling pathways which exerts an inhibitory effect on glucose absorption. Acts as a growth factor on certain tissues, through the activation of different signaling pathways increases expression of genes involved in cell cycle regulation such as CCND1, via JAK2-STAT3 pathway, or VEGFA, via MAPK1/3 and PI3K-AKT1 pathways. May also play an apoptotic role via JAK2-STAT3 pathway and up-regulation of BIRC5 expression. Pro-angiogenic, has mitogenic activity on vascular endothelial cells and plays a role in matrix remodeling by regulating the expression of matrix metalloproteinases (MMPs) and tissue inhibitors of metalloproteinases (TIMPs). In innate immunity, modulates the activity and function of neutrophils by increasing chemotaxis and the secretion of oxygen radicals. Increases phagocytosis by macrophages and enhances secretion of pro-inflammatory mediators. Increases cytotoxic ability of NK cells. Plays a pro-inflammatory role, in synergy with IL1B, by inducing NOS2 which promotes the production of IL6, IL8 and Prostaglandin E2, through a signaling pathway that involves JAK2, PI3K, MAP2K1/MEK1 and MAPK14/p38. In adaptive immunity, promotes the switch of memory T-cells towards T helper-1 cell immune responses. Increases CD4(+)CD25(-) T-cell proliferation and reduces autophagy during TCR (T-cell receptor) stimulation, through MTOR signaling pathway activation and BCL2 up-regulation. The chain is Leptin (LEP) from Halichoerus grypus (Gray seal).